We begin with the raw amino-acid sequence, 109 residues long: MVIVYLAIACGLGALVRYFFSRYNQASKLPLGTLIANLLGCFLIGVFYNHVESKEVYAILATGFCGGLTTFSTLNDELQRLLSDKKVFYSYLTLTYIGGLVAIFLGILL.

4 helical membrane-spanning segments follow: residues 1-21, 29-49, 55-75, and 87-107; these read MVIV…YFFS, LPLG…VFYN, EVYA…STLN, and VFYS…FLGI. Positions 66 and 69 each coordinate Na(+).

It belongs to the fluoride channel Fluc/FEX (TC 1.A.43) family.

The protein resides in the cell membrane. The enzyme catalyses fluoride(in) = fluoride(out). Na(+) is not transported, but it plays an essential structural role and its presence is essential for fluoride channel function. Functionally, fluoride-specific ion channel. Important for reducing fluoride concentration in the cell, thus reducing its toxicity. The sequence is that of Fluoride-specific ion channel FluC 1 from Streptococcus pneumoniae serotype 4 (strain ATCC BAA-334 / TIGR4).